Here is a 344-residue protein sequence, read N- to C-terminus: Phenylalanine--tRNA ligase alpha subunit (344 aa).

Position 256 (Glu-256) interacts with Mg(2+).

The protein belongs to the class-II aminoacyl-tRNA synthetase family. Phe-tRNA synthetase alpha subunit type 1 subfamily. Tetramer of two alpha and two beta subunits. It depends on Mg(2+) as a cofactor.

The protein localises to the cytoplasm. The enzyme catalyses tRNA(Phe) + L-phenylalanine + ATP = L-phenylalanyl-tRNA(Phe) + AMP + diphosphate + H(+). The sequence is that of Phenylalanine--tRNA ligase alpha subunit from Bacillus mycoides (strain KBAB4) (Bacillus weihenstephanensis).